A 303-amino-acid chain; its full sequence is tRNA (guanine-N(7)-)-methyltransferase (303 aa).

The segment at 1–64 (MPKPHQVQVI…STSDKISLPR (64 aa)) is disordered. Residues 10–38 (IKDRETQLREQQEAESKRRTYRDVKEETR) are compositionally biased toward basic and acidic residues. Residues Gly118, 141 to 142 (EI), 177 to 178 (NA), and Cys197 each bind S-adenosyl-L-methionine. Asp200 is a catalytic residue. An S-adenosyl-L-methionine-binding site is contributed by 275 to 277 (TEE).

It belongs to the class I-like SAM-binding methyltransferase superfamily. TrmB family. As to quaternary structure, forms a complex with TRM82.

The protein resides in the nucleus. It carries out the reaction guanosine(46) in tRNA + S-adenosyl-L-methionine = N(7)-methylguanosine(46) in tRNA + S-adenosyl-L-homocysteine. Its pathway is tRNA modification; N(7)-methylguanine-tRNA biosynthesis. Catalyzes the formation of N(7)-methylguanine at position 46 (m7G46) in tRNA. The chain is tRNA (guanine-N(7)-)-methyltransferase from Scheffersomyces stipitis (strain ATCC 58785 / CBS 6054 / NBRC 10063 / NRRL Y-11545) (Yeast).